A 1099-amino-acid polypeptide reads, in one-letter code: Sodium/potassium/calcium exchanger 1 (1099 aa).

The Extracellular portion of the chain corresponds to 1–452 (MGKLIRMGPQ…DLFSVEERRQ (452 aa)). The segment covering 123 to 134 (PTTTKNNYSPTA) has biased composition (polar residues). 3 disordered regions span residues 123–150 (PTTTKNNYSPTAAGTERRKEDTPTSSRT), 169–199 (TPRGEMKSYSPTQVREKVKYTPSPRGRRVGT), and 284–304 (PRRVESNSSAHPWGLVGKSNP). An N-linked (GlcNAc...) asparagine glycan is attached at N290. Residues 453–473 (GWVVLHVFGMMYVFVALAIVC) traverse the membrane as a helical segment. The Cytoplasmic segment spans residues 474–497 (DEYFVPALGVITDKLQISEDVAGA). One copy of the Alpha-1 repeat lies at 494 to 534 (VAGATFMAAGGSAPELFTSLIGVFISHSNVGIGTIVGSAVF). A helical membrane pass occupies residues 498-518 (TFMAAGGSAPELFTSLIGVFI). Over 519 to 522 (SHSN) the chain is Extracellular. Residues 523 to 543 (VGIGTIVGSAVFNILFVIGTC) traverse the membrane as a helical segment. The Cytoplasmic portion of the chain corresponds to 544–563 (SLFSREILNLTWWPLFRDVS). A helical transmembrane segment spans residues 564–584 (FYILDLIMLILFFLDSLIAWW). Position 585 (E585) is a topological domain, extracellular. A helical membrane pass occupies residues 586 to 606 (SLLLLLAYAFYVFTMKWNKHI). Over 607 to 907 (EVWVKEQLSR…SLDWPETRQK (301 aa)) the chain is Cytoplasmic. Position 658 is a phosphoserine (S658). The segment at 690 to 901 (EKEEESLNQG…GNEEPLSLDW (212 aa)) is disordered. T724 carries the post-translational modification Phosphothreonine. A compositionally biased stretch (acidic residues) spans 757-769 (PGEEGETAGEGET). Basic and acidic residues-rich tracts occupy residues 813–825 (EIHAEDGEMKGNE) and 835–849 (AENHGEAKNDEKGVE). Over residues 857–892 (GDSEEEEEEEEEQEEEEEEEEQEEEEEEEEEEEEKG) the composition is skewed to acidic residues. Residues 908–928 (QAIYLFLLPIVFPLWLTVPDV) form a helical membrane-spanning segment. Residues 929–935 (RRQESRK) are Extracellular-facing. The chain crosses the membrane as a helical span at residues 936–956 (FFVFTFLGSIMWIAMFSYLMV). Over 957–971 (WWAHQVGETIGISEE) the chain is Cytoplasmic. A helical transmembrane segment spans residues 972–992 (IMGLTILAAGTSIPDLITSVI). The Alpha-2 repeat unit spans residues 979 to 1010 (AAGTSIPDLITSVIVARKGLGDMAVSSSVGSN). Residues 993–1010 (VARKGLGDMAVSSSVGSN) lie on the Extracellular side of the membrane. Residues 1011–1031 (IFDITVGLPVPWLLFSLINGL) form a helical membrane-spanning segment. The Cytoplasmic portion of the chain corresponds to 1032 to 1039 (QPVPVSSN). A helical membrane pass occupies residues 1040–1060 (GLFCAIVLLFLMLLFVISSIA). Over 1061-1068 (SCKWRMNK) the chain is Extracellular. The chain crosses the membrane as a helical span at residues 1069 to 1089 (ILGFTMFLLYFVFLIISVMLE). Topologically, residues 1090–1099 (DRIISCPVSV) are cytoplasmic.

Belongs to the Ca(2+):cation antiporter (CaCA) (TC 2.A.19) family. SLC24A subfamily. In terms of processing, the uncleaved signal sequence is required for efficient membrane targeting and proper membrane integration. In terms of tissue distribution, expressed in the retina, particularly in the inner segment, outer and inner nuclear layers, and ganglion cell layer.

It is found in the cell membrane. The enzyme catalyses Ca(2+)(out) + K(+)(out) + 4 Na(+)(in) = Ca(2+)(in) + K(+)(in) + 4 Na(+)(out). Functionally, calcium, potassium:sodium antiporter that transports 1 Ca(2+) and 1 K(+) in exchange for 4 Na(+). Critical component of the visual transduction cascade, controlling the calcium concentration of outer segments during light and darkness. Light causes a rapid lowering of cytosolic free calcium in the outer segment of both retinal rod and cone photoreceptors and the light-induced lowering of calcium is caused by extrusion via this protein which plays a key role in the process of light adaptation. In Homo sapiens (Human), this protein is Sodium/potassium/calcium exchanger 1.